The following is a 155-amino-acid chain: uncharacterized protein (155 aa).

An N-terminal signal peptide occupies residues 1–23 (MRLMRNLMNALLLGAAASSLAVA). Cysteines 86 and 91 form a disulfide.

This sequence belongs to the ivy family.

It localises to the periplasm. This is an uncharacterized protein from Pseudomonas aeruginosa (strain ATCC 15692 / DSM 22644 / CIP 104116 / JCM 14847 / LMG 12228 / 1C / PRS 101 / PAO1).